The primary structure comprises 81 residues: Protein RADIALIS-like 3 (81 aa).

Positions 7-62 (SSSASWTRKENKLFERALATYDQDTPDRWHNVARAVGGKSAEEVRRHYELLIRDVN) constitute an SANT domain.

In terms of tissue distribution, expressed just outside the vascular bundles in the rosette stem and the leaf traces. Not detected in floral primordia.

It localises to the nucleus. In terms of biological role, probable transcription factor. This chain is Protein RADIALIS-like 3 (RL3), found in Arabidopsis thaliana (Mouse-ear cress).